A 265-amino-acid chain; its full sequence is Protein N-terminal and lysine N-methyltransferase EFM7 (265 aa).

S-adenosyl-L-methionine-binding positions include W55, 81-83, D103, W141, and A169; that span reads GAA.

This sequence belongs to the class I-like SAM-binding methyltransferase superfamily. EFM7 family.

Its subcellular location is the cytoplasm. Its function is as follows. S-adenosyl-L-methionine-dependent protein methyltransferase that trimethylates the N-terminal glycine 'Gly-2' of elongation factor 1-alpha, before also catalyzing the mono- and dimethylation of 'Lys-3'. This is Protein N-terminal and lysine N-methyltransferase EFM7 from Gibberella zeae (strain ATCC MYA-4620 / CBS 123657 / FGSC 9075 / NRRL 31084 / PH-1) (Wheat head blight fungus).